Reading from the N-terminus, the 207-residue chain is Large ribosomal subunit protein bL9 (207 aa).

Positions 162–176 (QKKEEKAKDEVSATE) are enriched in basic and acidic residues. The disordered stretch occupies residues 162–207 (QKKEEKAKDEVSATEKDEELMLSSVTNDNDGDGAKEIVVEGTEESQ).

It belongs to the bacterial ribosomal protein bL9 family.

Functionally, binds to the 23S rRNA. The sequence is that of Large ribosomal subunit protein bL9 from Ehrlichia ruminantium (strain Gardel).